We begin with the raw amino-acid sequence, 128 residues long: Serum amyloid A-4 protein (128 aa).

The N-terminal stretch at 1 to 18 (MKLFIGLIFCSLVMGVSS) is a signal peptide. The segment at 93–128 (SSEREEDQVSNRRAEEWGRSGQDPDHFRPAGLPKKY) is disordered. Positions 99–120 (DQVSNRRAEEWGRSGQDPDHFR) are enriched in basic and acidic residues.

The protein belongs to the SAA family. As to quaternary structure, apolipoprotein of the HDL complex.

Its subcellular location is the secreted. Its function is as follows. Major acute phase reactant. The sequence is that of Serum amyloid A-4 protein from Sus scrofa (Pig).